A 609-amino-acid chain; its full sequence is Autophagy-related protein 22-1 (609 aa).

Helical transmembrane passes span Tyr-35–Leu-55, Thr-117–Ile-137, Leu-151–Val-171, and Met-176–Leu-196. A compositionally biased stretch (basic and acidic residues) spans Ala-214–Ser-231. The segment at Ala-214–Gly-240 is disordered. The N-linked (GlcNAc...) asparagine glycan is linked to Asn-244. Residues Ile-287–Ala-307 traverse the membrane as a helical segment. Residue Asn-309 is glycosylated (N-linked (GlcNAc...) asparagine). Helical transmembrane passes span Leu-317 to Leu-337, Ile-381 to Thr-401, and Ala-415 to Trp-435. N-linked (GlcNAc...) asparagine glycosylation is present at Asn-443. The next 4 membrane-spanning stretches (helical) occupy residues Ile-450 to Pro-470, Phe-477 to Met-497, Ala-522 to Ile-542, and Ala-552 to Val-572.

This sequence belongs to the ATG22 family.

The protein localises to the vacuole membrane. In terms of biological role, vacuolar effluxer which mediate the efflux of amino acids resulting from autophagic degradation. The release of autophagic amino acids allows the maintenance of protein synthesis and viability during nitrogen starvation. This Aspergillus fumigatus (strain ATCC MYA-4609 / CBS 101355 / FGSC A1100 / Af293) (Neosartorya fumigata) protein is Autophagy-related protein 22-1 (atg22-1).